A 445-amino-acid polypeptide reads, in one-letter code: UDP-N-acetylglucosamine--peptide N-acetylglucosaminyltransferase stabilizing protein GtfB (445 aa).

A glycosyltransferase 1 region spans residues 55–171; sequence KPLYFNQVPV…TLPGQSMRYF (117 aa).

The protein belongs to the GtfB family. In terms of assembly, interacts with glycosyltransferase GtfA; probably forms a heterotetramer with 2 subunits each of GtfA and GtfB. Part of the accessory SecA2/SecY2 protein translocation apparatus.

The protein localises to the cell membrane. It participates in protein modification; protein glycosylation. Required for the polymorphic O-glycosylation of the serine-rich repeat protein PsrP. A stabilizing protein that is part of the accessory SecA2/SecY2 system specifically required to export serine-rich repeat cell wall proteins encoded upstream in the same operon. The GtfA-GtfB complex adds GlcNAc from UDP-GlcNAc to PsrP, attaching the first sugar residue. Stabilizes the glycosylation activity of GtfA. Has no N-acetylglucosaminyl transferase activity on its own. The sequence is that of UDP-N-acetylglucosamine--peptide N-acetylglucosaminyltransferase stabilizing protein GtfB from Streptococcus pneumoniae serotype 4 (strain ATCC BAA-334 / TIGR4).